A 385-amino-acid polypeptide reads, in one-letter code: tRNA (guanine-N(7)-)-methyltransferase non-catalytic subunit wuho (385 aa).

WD repeat units lie at residues 68 to 108 (KVEV…AKLL), 155 to 194 (GHLSIVYDILWTPDQKHIITSDRDDKIRVTNYPATFDIHS), and 198 to 236 (GHKEFVSGLALLTEEHLLSVSGDKTLRLWNYLSGMELLH).

This sequence belongs to the WD repeat TRM82 family. Forms a heterodimer with the catalytic subunit Mettl1. Interacts with mei-P26 and weakly interacts with bgcn; required for the function or formation of the mei-P26-bgcn-bam-sxl complex. Interacts with nanos; may be involved in mei-P26-dependent derepression of the BMP signaling pathway. Interacts with Myc; the interaction may be mediated by mei-P26 and may be involved in the regulation of ribosome biogenesis. As to expression, in testis, it is present at high level in hub cells, a niche for germline stem cells of testis. Ubiquitously expressed in all testicular cells throughout spermatogenesis. Ubiquitously expressed in all germline and somatic cells of the ovary.

The protein resides in the nucleus. The protein localises to the cytoplasm. The protein operates within tRNA modification; N(7)-methylguanine-tRNA biosynthesis. Functionally, required for the Mettl1-dependent formation of N(7)-methylguanine at position 46 (m7G46) in tRNA. In the Mettl1-wuho methyltransferase complex, it is required to stabilize and induce conformational changes of the catalytic subunit. Required for binding of nanos mRNA and repression of translation by the mei-P26-bgcn-bam-sxl complex. May cooperate with mei-P26 and nanos to derepress the BMP signaling pathway. May cooperate with mei-P26 to suppress expression of a subset of microRNAs. May cooperate with mei-P26 to regulate bam expression levels in germline cells during gametogenesis. Required to promote mitosis to meiosis transition during gametogenesis. May regulate germline cell division in part by regulating ribosome biogenesis. The chain is tRNA (guanine-N(7)-)-methyltransferase non-catalytic subunit wuho from Drosophila grimshawi (Hawaiian fruit fly).